The chain runs to 81 residues: Defensin-like protein 266 (81 aa).

The first 26 residues, 1 to 26, serve as a signal peptide directing secretion; that stretch reads MEKIVFRKIVFVAFLLSLSCLLEGEA. Disulfide bonds link cysteine 40-cysteine 58, cysteine 46-cysteine 63, and cysteine 50-cysteine 65.

The protein belongs to the DEFL family.

It is found in the secreted. This is Defensin-like protein 266 from Arabidopsis thaliana (Mouse-ear cress).